A 632-amino-acid polypeptide reads, in one-letter code: Chaperone protein DnaK (632 aa).

Position 198 is a phosphothreonine; by autocatalysis (T198). Positions Y599 to K632 are disordered. Positions A604–Q614 are enriched in polar residues. Positions D620–K632 are enriched in acidic residues.

It belongs to the heat shock protein 70 family.

Functionally, acts as a chaperone. The sequence is that of Chaperone protein DnaK from Thermodesulfovibrio yellowstonii (strain ATCC 51303 / DSM 11347 / YP87).